Here is a 124-residue protein sequence, read N- to C-terminus: Small ribosomal subunit protein uS13 (124 aa).

Residues 95–124 (GLPVRGQRTKTNARTRKGPKRTIAGKKKAR) are disordered.

This sequence belongs to the universal ribosomal protein uS13 family. In terms of assembly, part of the 30S ribosomal subunit. Forms a loose heterodimer with protein S19. Forms two bridges to the 50S subunit in the 70S ribosome.

Located at the top of the head of the 30S subunit, it contacts several helices of the 16S rRNA. In the 70S ribosome it contacts the 23S rRNA (bridge B1a) and protein L5 of the 50S subunit (bridge B1b), connecting the 2 subunits; these bridges are implicated in subunit movement. Contacts the tRNAs in the A and P-sites. The sequence is that of Small ribosomal subunit protein uS13 from Mycobacterium marinum (strain ATCC BAA-535 / M).